Consider the following 286-residue polypeptide: Energy-coupling factor transporter ATP-binding protein EcfA2 (286 aa).

One can recognise an ABC transporter domain in the interval 3-246; the sequence is IRFDNVSYTY…KEKLADWHIA (244 aa). 40-47 contributes to the ATP binding site; the sequence is GQTGSGKS.

This sequence belongs to the ABC transporter superfamily. Energy-coupling factor EcfA family. Forms a stable energy-coupling factor (ECF) transporter complex composed of 2 membrane-embedded substrate-binding proteins (S component), 2 ATP-binding proteins (A component) and 2 transmembrane proteins (T component).

It is found in the cell membrane. Functionally, ATP-binding (A) component of a common energy-coupling factor (ECF) ABC-transporter complex. Unlike classic ABC transporters this ECF transporter provides the energy necessary to transport a number of different substrates. This Staphylococcus aureus (strain bovine RF122 / ET3-1) protein is Energy-coupling factor transporter ATP-binding protein EcfA2.